Consider the following 202-residue polypeptide: MKTSAQQLLSALLLPLSVLAAPTGSIEARACSDVTVIFARGTTETGTLGTVVGPPFLAALKSALGSSSVTMNGVDYPADVPGFLQGGDPAGSQTMATMVTSTLSSCPDTKLVISGYSQGGQLVHNAAKLLPAETTAKISSAVIFGDPDNGDPVQGVSADRTDIICHAGDNICQGGSLILLAHLTYGMDTTAAAAFVKKAAGL.

The N-terminal stretch at 1–20 (MKTSAQQLLSALLLPLSVLA) is a signal peptide. A disulfide bridge connects residues cysteine 31 and cysteine 106. Serine 117 acts as the Nucleophile in catalysis. An intrachain disulfide couples cysteine 165 to cysteine 172. Aspartate 169 is a catalytic residue. Histidine 182 serves as the catalytic Proton donor/acceptor.

It belongs to the cutinase family. The 2 disulfide bonds play a critical role in holding the catalytic residues in juxta-position; reduction of the disulfide bridges results in the complete inactivation of the enzyme.

Its subcellular location is the secreted. It carries out the reaction cutin + H2O = cutin monomers.. Functionally, catalyzes the hydrolysis of complex carboxylic polyesters found in the cell wall of plants. Degrades cutin, a macromolecule that forms the structure of the plant cuticle. Allows pathogenic fungi to penetrate through the cuticular barrier into the host plant during the initial stage of fungal infection. The sequence is that of Cutinase from Botryotinia fuckeliana (Noble rot fungus).